We begin with the raw amino-acid sequence, 1704 residues long: Vitellogenin-1 (1704 aa).

The N-terminal stretch at 1 to 14 (MKAVVLALTLAFVA) is a signal peptide. The 639-residue stretch at 22–660 (FAAGKTYVYK…DAATFMPKSF (639 aa)) folds into the Vitellogenin domain. 16 N-linked (GlcNAc...) asparagine glycosylation sites follow: Asn-446, Asn-635, Asn-903, Asn-908, Asn-1019, Asn-1054, Asn-1080, Asn-1121, Asn-1174, Asn-1285, Asn-1322, Asn-1375, Asn-1379, Asn-1405, Asn-1456, and Asn-1512. The segment covering 1078 to 1109 (RRNSSSSSSSSSSSSSESRSSRSSSSSSSSSR) has biased composition (low complexity). The disordered stretch occupies residues 1078-1213 (RRNSSSSSSS…SSDRRSKEVM (136 aa)). Residues 1122-1204 (SSSSSSSRRS…FSDSSSSSSS (83 aa)) show a composition bias toward low complexity. In terms of domain architecture, VWFD spans 1442 to 1617 (AECSFVEDTL…SWILPAESCR (176 aa)). Intrachain disulfides connect Cys-1444–Cys-1580 and Cys-1467–Cys-1616.

In terms of processing, phosvitin, an egg yolk storage protein, is one of the most highly phosphorylated (10%) proteins in nature. The N-terminal of the blood vitellogenin is blocked. In terms of tissue distribution, produced by the liver, secreted into the blood and then sequestered by receptor mediated endocytosis into growing oocytes, where it is generally cleaved, giving rise to the respective yolk components composed of complex suite of small cleavage products.

In terms of biological role, precursor of the major egg-yolk proteins that are sources of nutrients during early development of oviparous organisms. This Fundulus heteroclitus (Killifish) protein is Vitellogenin-1 (vtg1).